A 118-amino-acid chain; its full sequence is Large ribosomal subunit protein uL24 (118 aa).

This sequence belongs to the universal ribosomal protein uL24 family. As to quaternary structure, part of the 50S ribosomal subunit.

Its function is as follows. One of two assembly initiator proteins, it binds directly to the 5'-end of the 23S rRNA, where it nucleates assembly of the 50S subunit. In terms of biological role, one of the proteins that surrounds the polypeptide exit tunnel on the outside of the subunit. The chain is Large ribosomal subunit protein uL24 from Prochlorococcus marinus subsp. pastoris (strain CCMP1986 / NIES-2087 / MED4).